The following is a 211-amino-acid chain: Scoloptoxin SSD43 (211 aa).

The N-terminal stretch at 1–20 (MNFVIYGVIVVLTSQLYVDG) is a signal peptide.

In terms of processing, contains 3 disulfide bonds. As to expression, expressed by the venom gland.

It is found in the secreted. Functionally, shows trypsin inhibiting activity. The protein is highly thermally stable, since its incubation in boiling water during 10 minutes does not reduce its activity. The sequence is that of Scoloptoxin SSD43 from Scolopendra dehaani (Thai centipede).